A 465-amino-acid chain; its full sequence is Probable glucan endo-1,3-beta-glucosidase eglC (465 aa).

The first 19 residues, 1-19 (MFTKTQILALALSIASAEA), serve as a signal peptide directing secretion. The Proton donor role is filled by glutamate 128. N-linked (GlcNAc...) asparagine glycosylation is present at asparagine 183. Catalysis depends on glutamate 239, which acts as the Nucleophile. Asparagine 318 carries N-linked (GlcNAc...) asparagine glycosylation. Composition is skewed to low complexity over residues 320 to 333 (SSASASASGSSAQS) and 380 to 438 (SPSA…ATPA). Disordered stretches follow at residues 320–356 (SSASASASGSSAQSTGFVSTTKPAASPSGSSGLGHGG) and 380–440 (SPSA…PADF). A lipid anchor (GPI-anchor amidated glycine) is attached at glycine 442. Positions 443–465 (AGSRLSGSIFGAAMLVAALAVAL) are cleaved as a propeptide — removed in mature form.

The protein belongs to the glycosyl hydrolase 17 family. Post-translationally, the GPI-anchor is attached to the protein in the endoplasmic reticulum and serves to target the protein to the cell surface. There, the glucosamine-inositol phospholipid moiety is cleaved off and the GPI-modified mannoprotein is covalently attached via its lipidless GPI glycan remnant to the 1,6-beta-glucan of the outer cell wall layer.

Its subcellular location is the cell membrane. The protein resides in the secreted. It localises to the cell wall. The enzyme catalyses Hydrolysis of (1-&gt;3)-beta-D-glucosidic linkages in (1-&gt;3)-beta-D-glucans.. Glucanases play a role in cell expansion during growth, in cell-cell fusion during mating, and in spore release during sporulation. This enzyme may be involved in beta-glucan degradation and also function biosynthetically as a transglycosylase. This Emericella nidulans (strain FGSC A4 / ATCC 38163 / CBS 112.46 / NRRL 194 / M139) (Aspergillus nidulans) protein is Probable glucan endo-1,3-beta-glucosidase eglC (eglC).